The sequence spans 63 residues: Large ribosomal subunit protein uL30 (63 aa).

It belongs to the universal ribosomal protein uL30 family. In terms of assembly, part of the 50S ribosomal subunit.

This Rickettsia akari (strain Hartford) protein is Large ribosomal subunit protein uL30.